Reading from the N-terminus, the 1396-residue chain is Sterol 3-beta-glucosyltransferase (1396 aa).

A compositionally biased stretch (basic and acidic residues) spans 1 to 16 (MRPFIDDAKRRAERRL). Disordered regions lie at residues 1 to 21 (MRPF…ASRQ), 40 to 64 (DADD…MQYM), 83 to 196 (ARFD…RAAP), and 209 to 232 (ETEN…KKSQ). Positions 94–107 (ETRTRPRFLSEKPF) are enriched in basic and acidic residues. The segment covering 186 to 196 (RPRSATPRAAP) has biased composition (low complexity). The 36-residue stretch at 238–273 (RQLMEMFRFPTPEKVVVEYACSLLQSMLLQGYMYVT) folds into the GRAM 1 domain. The 100-residue stretch at 289-388 (RVIKSGYIYK…WVRALQKVIF (100 aa)) folds into the PH domain. 2 disordered regions span residues 460-532 (GTPT…SSSS) and 571-627 (TIHT…ESKD). Composition is skewed to polar residues over residues 484-532 (GSQN…SSSS) and 571-584 (TIHT…GTAR). A compositionally biased stretch (basic and acidic residues) spans 588-602 (RHSDEITRSTTEHGL). Residues 717–783 (ERFRAHFALP…HDIENVEKEK (67 aa)) enclose the GRAM 2 domain. Positions 905, 906, 908, 1208, 1210, 1223, 1227, 1228, 1247, and 1248 each coordinate UDP-alpha-D-glucose. Residues 1324-1343 (SSISSTPFSPTPSTKTSDDQ) show a composition bias toward low complexity. The tract at residues 1324-1346 (SSISSTPFSPTPSTKTSDDQNAN) is disordered.

The protein belongs to the glycosyltransferase 28 family.

The protein resides in the cytoplasm. It is found in the preautophagosomal structure membrane. The catalysed reaction is a sterol + UDP-alpha-D-glucose = a sterol 3-beta-D-glucoside + UDP + H(+). It carries out the reaction ergosterol + UDP-alpha-D-glucose = ergosteryl 3-beta-D-glucoside + UDP + H(+). Functionally, sterol glycosyltransferase responsible for the glycosylation of ergosterol to form ergosterol-glucoside. The protein is Sterol 3-beta-glucosyltransferase of Emericella nidulans (strain FGSC A4 / ATCC 38163 / CBS 112.46 / NRRL 194 / M139) (Aspergillus nidulans).